Reading from the N-terminus, the 563-residue chain is Cytochrome P450 monooxygenase phqL (563 aa).

3 consecutive transmembrane segments (helical) span residues 20 to 40 (ENFS…IIIF), 52 to 72 (IPVG…FVPG), and 80 to 100 (ALWL…VSIL). N-linked (GlcNAc...) asparagine glycosylation occurs at asparagine 279. The helical transmembrane segment at 362-382 (LVIFAGSGTVAVTIIGCLYFL) threads the bilayer. Residue asparagine 419 is glycosylated (N-linked (GlcNAc...) asparagine). Cysteine 502 lines the heme pocket.

This sequence belongs to the cytochrome P450 family. Heme serves as cofactor.

The protein resides in the membrane. It participates in alkaloid biosynthesis. Its function is as follows. Cytochrome P450 monooxygenase; part of the gene cluster that mediates the biosynthesis of paraherquamide, a fungal indole alkaloid that belongs to a family of natural products containing a characteristic bicyclo[2.2.2]diazaoctane core. The first steps in the biosynthesis of paraherquamide is the production of the beta-methyl-proline precursor from L-isoleucine. They require oxidation of a terminally hydroxylated L-isoleucine to the corresponding aldehyde by enzymes which have still to be identified. Spontaneous cyclization and dehydration would yield the 4-methyl pyrolline-5-carboxylic acid, which is then reduced by the pyrroline-5-carboxylate reductase phqD leading to the beta-methyl-proline precursor. The next step of paraherquamide biosynthesis involves coupling of beta-methyl-proline and L-tryptophan by the bimodular NRPS phqB, to produce a monooxopiperazine intermediate. The reductase (R) domain of phqB utilizes NADPH for hydride transfer to reduce the thioester bond of the T domain-tethered linear dipeptide to a hemithioaminal intermediate, which spontaneously cleaves the C-S bond to release the aldehyde product. This compound undergoes spontaneous cyclization and dehydration to give a dienamine which is reverse prenylated at C-2 by the reverse prenyltransferase phqJ. The other prenyltransferase present in the cluster, phqI may be a redundant gene in the pathway. During biosynthetic assembly, the key step to produce the polycyclic core is catalyzed by the bifunctional reductase and intramolecular [4+2] Diels-Alderase, phqE, resulting in formation of the [2.2.2] diazaoctane intermediate preparaherquamide. Following formation of preparaherquamide, an indole 2,3-epoxidation-initiated pinacol-like rearrangement is catalyzed by the phqK FAD-dependent monooxygenase. The prenyltransferase phqA, the cytochrome P450 monooxygenase phqL, and the FAD-linked oxidoreductase phqH (or the cytochrome P450 monooxygenase phqM), are proposed to be involved in the formation of the pyran ring. The FAD-dependent monooxygenase phqK is likely responsible for generation of the spiro-oxindole, and the N-methylation is likely mediated by the phqN methyltransferase leading to the isolable natural product paraherquamide F. However, the order of these biosynthetic steps has still to be determined. In late-stage paraherquamide biosynthesis, the third P450 monooxygenase, phqO, is probably responsible for the C-14 hydroxylation, transforming paraherquamide F to paraherquamide G, and paraherquamide E to the final product paraherquamide A. The expansion from the 6-membered ring pyran (in paraherquamides F and G) to the 7-membered dioxepin ring (in paraherquamides A and E) represents a poorly understood but intriguing process that probably involves the 2-oxoglutarate-dependent dioxygenase phqC. Finally, the remaining members of the paraherquamide cluster, including phqI as well as phqM (or phqH), do not have a clearly prescribed role and appear to be redundant. The polypeptide is Cytochrome P450 monooxygenase phqL (Penicillium fellutanum).